A 111-amino-acid chain; its full sequence is UPF0060 membrane protein XCC2880 (111 aa).

A run of 4 helical transmembrane segments spans residues 8–28, 34–54, 62–82, and 91–111; these read LLLF…PYLW, SVWL…LLTL, VYAA…WWVD, and LLGA…PRSG.

This sequence belongs to the UPF0060 family.

Its subcellular location is the cell inner membrane. This Xanthomonas campestris pv. campestris (strain ATCC 33913 / DSM 3586 / NCPPB 528 / LMG 568 / P 25) protein is UPF0060 membrane protein XCC2880.